The primary structure comprises 153 residues: Large ribosomal subunit protein uL15 (153 aa).

The interval methionine 1–alanine 42 is disordered. Over residues arginine 21–cysteine 31 the composition is skewed to gly residues.

This sequence belongs to the universal ribosomal protein uL15 family. As to quaternary structure, part of the 50S ribosomal subunit.

Binds to the 23S rRNA. The protein is Large ribosomal subunit protein uL15 of Nitrosomonas europaea (strain ATCC 19718 / CIP 103999 / KCTC 2705 / NBRC 14298).